Here is a 172-residue protein sequence, read N- to C-terminus: Adenine phosphoribosyltransferase (172 aa).

This sequence belongs to the purine/pyrimidine phosphoribosyltransferase family. In terms of assembly, homodimer.

The protein resides in the cytoplasm. It catalyses the reaction AMP + diphosphate = 5-phospho-alpha-D-ribose 1-diphosphate + adenine. It participates in purine metabolism; AMP biosynthesis via salvage pathway; AMP from adenine: step 1/1. In terms of biological role, catalyzes a salvage reaction resulting in the formation of AMP, that is energically less costly than de novo synthesis. This is Adenine phosphoribosyltransferase from Prochlorococcus marinus (strain MIT 9303).